Here is a 513-residue protein sequence, read N- to C-terminus: Histone acetyltransferase KAT5 (513 aa).

The Tudor-knot domain maps to 8-65 (IEGCRLPVLRRNQDNEDEWPLAEILSVKDISGRKLFYVHYIDFNKRLDEWVTHERLDL). At Lys52 the chain carries N6-acetyllysine. The disordered stretch occupies residues 69–106 (QFPKKEAKTPTKNGLPGSRPGSPEREVPASAQASGKTL). Ser86 is subject to Phosphoserine; by GSK3. Ser90 carries the post-translational modification Phosphoserine; by CDK1 and CDK9. An N6-acetyllysine; by autocatalysis mark is found at Lys104 and Lys120. Residues 122 to 220 (REAIPGGEPD…RMTGSLVSDR (99 aa)) are disordered. Over residues 133–144 (PLSSSSCLQPNH) the composition is skewed to polar residues. 4 positions are modified to N6-acetyllysine; by autocatalysis: Lys148, Lys150, Lys187, and Lys189. A Phosphoserine modification is found at Ser199. Residues 227–504 (TRMKNIECIE…IDSKCLHFTP (278 aa)) enclose the MYST-type HAT domain. A C2HC MYST-type zinc finger spans residues 260–285 (LYLCEFCLKYGRSLKCLQRHLTKCDL). Residue Lys327 is modified to N6-acetyllysine; by autocatalysis. Residues 368–513 (ACILTLPPYQ…PKDWSKRGKW (146 aa)) form an interaction with ATF2 region. Acetyl-CoA is bound by residues 370 to 372 (ILT) and 377 to 383 (QRRGYGK). Glu403 serves as the catalytic Proton donor/acceptor. Acetyl-CoA contacts are provided by Ser407 and Ser416. Lys430 is covalently cross-linked (Glycyl lysine isopeptide (Lys-Gly) (interchain with G-Cter in SUMO1); alternate). Lys430 is covalently cross-linked (Glycyl lysine isopeptide (Lys-Gly) (interchain with G-Cter in SUMO2); alternate). Residue Lys451 forms a Glycyl lysine isopeptide (Lys-Gly) (interchain with G-Cter in SUMO1) linkage.

This sequence belongs to the MYST (SAS/MOZ) family. Component of the NuA4 histone acetyltransferase complex which contains the catalytic subunit KAT5/TIP60 and the subunits EP400, TRRAP/PAF400, BRD8/SMAP, EPC1, DMAP1/DNMAP1, RUVBL1/TIP49, RUVBL2, ING3, actin, ACTL6A/BAF53A, MORF4L1/MRG15, MORF4L2/MRGX, MRGBP, YEATS4/GAS41, VPS72/YL1 and MEAF6. KAT5/TIP60, EPC1, and ING3 together constitute a minimal HAT complex termed Piccolo NuA4. The NuA4 complex interacts with MYC. Interacts with ATM. Interacts with JADE1. Interacts with PLA2G4A/CPLA2, EDNRA and HDAC7. Interacts with the cytoplasmic tail of APP and APBB1/FE65. Interacts with TRIM24 and TRIM68. Forms a complex with SENP6 and UBE2I in response to UV irradiation. Identified in a complex with HINT1. Interacts with ATF2 and CUL3. Interacts with NR1D2 (via N-terminus). Component of a SWR1-like complex. Interacts with FOXP3. Interacts with ZBTB49. Interacts with SRF. Interacts with ATF3; promoting autoacetylation and deubiquitination by USP7. Interacts with EP300/p300; interaction promotes KAT5 autoacetylation. Interacts with PRKDC; interaction is impaired following KAT5 sumoylation. Interacts with GPR50. Interacts with NME3; this interaction enables recruitment of NME3 at DNA damage sites where it plays a role in the repair of DNA. As to quaternary structure, (Microbial infection) Interacts with HIV-1 TAT. In terms of processing, phosphorylated on Ser-86 and Ser-90; enhanced during G2/M phase. The phosphorylated form has a higher activity. Phosphorylation at Ser-90 by CDK1 or CDK9 is a prerequisite for phosphorylation at Ser-86 by GSK3. Phosphorylation at Ser-86 by GSK3 (GSK3A or GSK3B) activates acetyltransferase and acyltransferase activities. Phosphorylation at Ser-90 by CDK9 promotes KAT5 recruitment to chromatin. Phosphorylation by VRK1 following DNA damage promotes KAT5 association with chromatin and histone acetyltransferase activity. Autoacetylated. Autoacetylation is required for histone acetyltransferase activity. Autoacetylation at Lys-327 is facilitated by interaction with EP300/p300: it prevents ubiquitination and subsequent degradation by the proteasome and promotes acetylation of target proteins. Deacetylated by HDAC3 and SIRT1. Deacetylation by HDAC3 promotes its ubiquitination and cytoplasmic localization. Post-translationally, sumoylated by UBE2I at Lys-430 and Lys-451, leading to increase of its histone acetyltransferase activity in UV-induced DNA damage response, as well as its translocation to nuclear bodies. Sumoylation with SUMO2 by PIAS4 at Lys-430 promotes repair of DNA double-strand breaks (DSBs) via homologous recombination (HR). Sumoylation by PIAS4 impairs interaction with PRKDC, inhibiting non-homologous end joining (NHEJ)-mediated repair of DSBs, thereby facilitating HR. Desumoylated by SENP3. In terms of processing, ubiquitinated by MDM2, leading to its proteasome-dependent degradation. Ubiquitination is prevented by autoacetylation at Lys-327. Ubiquitinated following deacetylation by HDAC3, leading to cytoplasmic localization. Deubiquitinated by USP7 following interaction with ATF3, promoting its stabilization. (Microbial infection) In case of HIV-1 infection, interaction with the viral Tat protein leads to KAT5 polyubiquitination and targets it to degradation.

The protein localises to the nucleus. It localises to the chromosome. It is found in the cytoplasm. The protein resides in the centromere. Its subcellular location is the kinetochore. The protein localises to the cytoskeleton. It localises to the spindle pole. It is found in the nucleolus. The protein resides in the perinuclear region. It carries out the reaction L-lysyl-[histone] + acetyl-CoA = N(6)-acetyl-L-lysyl-[histone] + CoA + H(+). The enzyme catalyses L-lysyl-[protein] + acetyl-CoA = N(6)-acetyl-L-lysyl-[protein] + CoA + H(+). The catalysed reaction is (2E)-butenoyl-CoA + L-lysyl-[protein] = N(6)-(2E)-butenoyl-L-lysyl-[protein] + CoA + H(+). It catalyses the reaction 2-hydroxyisobutanoyl-CoA + L-lysyl-[protein] = N(6)-(2-hydroxyisobutanoyl)-L-lysyl-[protein] + CoA + H(+). It carries out the reaction (S)-lactoyl-CoA + L-lysyl-[protein] = N(6)-[(S)-lactoyl]-L-lysyl-[protein] + CoA + H(+). Its activity is regulated as follows. Acyltransferase and acetyltransferase activities are activated by phosphorylation and autoacetylation. Autoacetylation activates the histone acetyltransferase activity. In terms of biological role, catalytic subunit of the NuA4 histone acetyltransferase complex, a multiprotein complex involved in transcriptional activation of select genes principally by acetylation of nucleosomal histones H2A and H4. Histone acetylation alters nucleosome-DNA interactions and promotes interaction of the modified histones with other proteins which positively regulate transcription. The NuA4 histone acetyltransferase complex is required for the activation of transcriptional programs associated with proto-oncogene mediated growth induction, tumor suppressor mediated growth arrest and replicative senescence, apoptosis, and DNA repair. The NuA4 complex plays a direct role in repair of DNA double-strand breaks (DSBs) by promoting homologous recombination (HR): the complex inhibits TP53BP1 binding to chromatin via MBTD1, which recognizes and binds histone H4 trimethylated at 'Lys-20' (H4K20me), and KAT5 that catalyzes acetylation of 'Lys-15' of histone H2A (H2AK15ac), thereby blocking the ubiquitination mark required for TP53BP1 localization at DNA breaks. Also involved in DSB repair by mediating acetylation of 'Lys-5' of histone H2AX (H2AXK5ac), promoting NBN/NBS1 assembly at the sites of DNA damage. The NuA4 complex plays a key role in hematopoietic stem cell maintenance and is required to maintain acetylated H2A.Z/H2AZ1 at MYC target genes. The NuA4 complex is also required for spermatid development by promoting acetylation of histones: histone hyperacetylation is required for histone replacement during the transition from round to elongating spermatids. Component of a SWR1-like complex that specifically mediates the removal of histone H2A.Z/H2AZ1 from the nucleosome. Also acetylates non-histone proteins, such as BMAL1, ATM, AURKB, CHKA, CGAS, ERCC4/XPF, LPIN1, TP53/p53, NDC80/HEC1, NR1D2, RAN, SOX4, FOXP3, SQSTM1, ULK1 and RUBCNL/Pacer. Directly acetylates and activates ATM. Promotes nucleotide excision repair (NER) by mediating acetylation of ERCC4/XPF, thereby promoting formation of the ERCC4-ERCC1 complex. Relieves NR1D2-mediated inhibition of APOC3 expression by acetylating NR1D2. Acts as a regulator of regulatory T-cells (Treg) by catalyzing FOXP3 acetylation, thereby promoting FOXP3 transcriptional repressor activity. Involved in skeletal myoblast differentiation by mediating acetylation of SOX4. Catalyzes acetylation of APBB1/FE65, increasing its transcription activator activity. Promotes transcription elongation during the activation phase of the circadian cycle by catalyzing acetylation of BMAL1, promoting elongation of circadian transcripts. Together with GSK3 (GSK3A or GSK3B), acts as a regulator of autophagy: phosphorylated at Ser-86 by GSK3 under starvation conditions, leading to activate acetyltransferase activity and promote acetylation of key autophagy regulators, such as ULK1 and RUBCNL/Pacer. Acts as a regulator of the cGAS-STING innate antiviral response by catalyzing acetylation the N-terminus of CGAS, thereby promoting CGAS DNA-binding and activation. Also regulates lipid metabolism by mediating acetylation of CHKA or LPIN1. Promotes lipolysis of lipid droplets following glucose deprivation by mediating acetylation of isoform 1 of CHKA, thereby promoting monomerization of CHKA and its conversion into a tyrosine-protein kinase. Acts as a regulator of fatty-acid-induced triacylglycerol synthesis by catalyzing acetylation of LPIN1, thereby promoting the synthesis of diacylglycerol. In addition to protein acetyltransferase, can use different acyl-CoA substrates, such as (2E)-butenoyl-CoA (crotonyl-CoA), S-lactoyl-CoA (lactyl-CoA) and 2-hydroxyisobutanoyl-CoA (2-hydroxyisobutyryl-CoA), and is able to mediate protein crotonylation, lactylation and 2-hydroxyisobutyrylation, respectively. Acts as a key regulator of chromosome segregation and kinetochore-microtubule attachment during mitosis by mediating acetylation or crotonylation of target proteins. Catalyzes acetylation of AURKB at kinetochores, increasing AURKB activity and promoting accurate chromosome segregation in mitosis. Acetylates RAN during mitosis, promoting microtubule assembly at mitotic chromosomes. Acetylates NDC80/HEC1 during mitosis, promoting robust kinetochore-microtubule attachment. Catalyzes crotonylation of MAPRE1/EB1, thereby ensuring accurate spindle positioning in mitosis. Catalyzes lactylation of NBN/NBS1 in response to DNA damage, thereby promoting DNA double-strand breaks (DSBs) via homologous recombination (HR). Functionally, (Microbial infection) Catalyzes the acetylation of flavivirus NS3 protein to modulate their RNA-binding and -unwinding activities leading to facilitate viral replication. This Homo sapiens (Human) protein is Histone acetyltransferase KAT5.